We begin with the raw amino-acid sequence, 451 residues long: 2,4-dinitrotoluene dioxygenase system, large oxygenase component (451 aa).

A Rieske domain is found at 42 to 126 (WLFLTHDSLI…LQSVPFEKEL (85 aa)). The [2Fe-2S] cluster site is built by Cys-84, His-86, Cys-104, and His-107. The Fe cation site is built by His-211, His-216, and Asp-365.

It belongs to the bacterial ring-hydroxylating dioxygenase alpha subunit family. The 2,4-dinitrotoluene dioxygenase (DNTDO) multicomponent enzyme system is composed of an electron transfer component and a dioxygenase component (iron sulfur protein (ISP)). The electron transfer component is composed of a ferredoxin reductase (DntAa) and a ferredoxin (DntAb), and the dioxygenase component is formed of a large alpha subunit (DntAc) and a small beta subunit (DntAd). [2Fe-2S] cluster serves as cofactor. It depends on Fe(2+) as a cofactor.

The enzyme catalyses 2,4-dinitrotoluene + NADH + O2 = 4-methyl-5-nitrocatechol + nitrite + NAD(+). In terms of biological role, component of the 2,4-dinitrotoluene dioxygenase (DNTDO) multicomponent enzyme system which catalyzes the incorporation of both atoms of molecular oxygen into 2,4-dinitrotoluene (DNT) to form 4-methyl-5-nitrocatechol (MNC) and nitrite. The alpha subunit has a catalytic role in the holoenzyme. Also able to convert naphthalene to cis-(1R,2S)-dihydroxy-1,2-dihydronaphthalene. The polypeptide is 2,4-dinitrotoluene dioxygenase system, large oxygenase component (Burkholderia sp. (strain RASC)).